The chain runs to 142 residues: 3-hydroxyacyl-[acyl-carrier-protein] dehydratase FabZ (142 aa).

Residue H48 is part of the active site.

This sequence belongs to the thioester dehydratase family. FabZ subfamily.

Its subcellular location is the cytoplasm. The enzyme catalyses a (3R)-hydroxyacyl-[ACP] = a (2E)-enoyl-[ACP] + H2O. Functionally, involved in unsaturated fatty acids biosynthesis. Catalyzes the dehydration of short chain beta-hydroxyacyl-ACPs and long chain saturated and unsaturated beta-hydroxyacyl-ACPs. The polypeptide is 3-hydroxyacyl-[acyl-carrier-protein] dehydratase FabZ (Natranaerobius thermophilus (strain ATCC BAA-1301 / DSM 18059 / JW/NM-WN-LF)).